We begin with the raw amino-acid sequence, 414 residues long: Voltage-gated ClC-type chloride channel ClcB (414 aa).

The next 11 helical transmembrane spans lie at 5 to 25, 54 to 74, 116 to 136, 147 to 167, 169 to 189, 220 to 240, 255 to 275, 292 to 312, 327 to 347, 353 to 373, and 381 to 401; these read LVIS…FHQA, ALTP…YQRY, SAIG…SVFA, LWVA…PLAG, LFIA…PVVI, VQYF…PLFL, LLPP…SLIF, TPPG…AVLA, LFVG…WPVL, LLMA…APIM, and MTGE…ATTI.

It belongs to the chloride channel (TC 2.A.49) family. ClcB subfamily.

It is found in the cell inner membrane. Probably acts as an electrical shunt for an outwardly-directed proton pump that is linked to amino acid decarboxylation, as part of the extreme acid resistance (XAR) response. The sequence is that of Voltage-gated ClC-type chloride channel ClcB from Yersinia pestis.